Here is a 284-residue protein sequence, read N- to C-terminus: D-tagatose-1,6-bisphosphate aldolase subunit GatY (284 aa).

Asp82 (proton donor) is an active-site residue. Residues His83 and His180 each contribute to the Zn(2+) site. Gly181 is a binding site for dihydroxyacetone phosphate. His208 is a binding site for Zn(2+). Residues 209-211 and 230-233 contribute to the dihydroxyacetone phosphate site; these read GAS and NVAT.

This sequence belongs to the class II fructose-bisphosphate aldolase family. TagBP aldolase GatY subfamily. Forms a complex with GatZ. It depends on Zn(2+) as a cofactor.

The enzyme catalyses D-tagatofuranose 1,6-bisphosphate = D-glyceraldehyde 3-phosphate + dihydroxyacetone phosphate. It functions in the pathway carbohydrate metabolism; D-tagatose 6-phosphate degradation; D-glyceraldehyde 3-phosphate and glycerone phosphate from D-tagatose 6-phosphate: step 2/2. In terms of biological role, catalytic subunit of the tagatose-1,6-bisphosphate aldolase GatYZ, which catalyzes the reversible aldol condensation of dihydroxyacetone phosphate (DHAP or glycerone-phosphate) with glyceraldehyde 3-phosphate (G3P) to produce tagatose 1,6-bisphosphate (TBP). Requires GatZ subunit for full activity and stability. Is involved in the catabolism of galactitol. This is D-tagatose-1,6-bisphosphate aldolase subunit GatY from Escherichia coli O139:H28 (strain E24377A / ETEC).